Reading from the N-terminus, the 109-residue chain is Putative double-stranded DNA mimic protein YciU (109 aa).

The protein belongs to the putative dsDNA mimic protein family.

Functionally, may act as a double-stranded DNA (dsDNA) mimic. Probably regulates the activity of a dsDNA-binding protein. The chain is Putative double-stranded DNA mimic protein YciU from Shigella flexneri.